We begin with the raw amino-acid sequence, 272 residues long: Glutamate 5-kinase (272 aa).

Lys-14 serves as a coordination point for ATP. Substrate is bound by residues Ser-54, Asp-141, and Asn-157. ATP contacts are provided by residues 177 to 178 and 219 to 225; these read SD and TGGMLSK.

It belongs to the glutamate 5-kinase family.

It is found in the cytoplasm. It carries out the reaction L-glutamate + ATP = L-glutamyl 5-phosphate + ADP. The protein operates within amino-acid biosynthesis; L-proline biosynthesis; L-glutamate 5-semialdehyde from L-glutamate: step 1/2. Its function is as follows. Catalyzes the transfer of a phosphate group to glutamate to form L-glutamate 5-phosphate. The chain is Glutamate 5-kinase from Streptococcus pyogenes serotype M28 (strain MGAS6180).